We begin with the raw amino-acid sequence, 35 residues long: Defensin-B (35 aa).

Cystine bridges form between Cys4/Cys25, Cys10/Cys33, and Cys14/Cys35.

It is found in the secreted. Has antibacterial activity against M.luteus and E.coli. The polypeptide is Defensin-B (Mytilus edulis (Blue mussel)).